Reading from the N-terminus, the 183-residue chain is ATP-dependent protease subunit HslV (183 aa).

The active site involves T13. The Na(+) site is built by G168, C171, and T174.

The protein belongs to the peptidase T1B family. HslV subfamily. A double ring-shaped homohexamer of HslV is capped on each side by a ring-shaped HslU homohexamer. The assembly of the HslU/HslV complex is dependent on binding of ATP.

Its subcellular location is the cytoplasm. It carries out the reaction ATP-dependent cleavage of peptide bonds with broad specificity.. With respect to regulation, allosterically activated by HslU binding. In terms of biological role, protease subunit of a proteasome-like degradation complex believed to be a general protein degrading machinery. The chain is ATP-dependent protease subunit HslV from Xanthomonas campestris pv. campestris (strain ATCC 33913 / DSM 3586 / NCPPB 528 / LMG 568 / P 25).